The primary structure comprises 415 residues: Beta-2 adrenergic receptor (415 aa).

Over 1-34 (MGQPANRSVFLLAPNGSHAPDQGDSQERSEAWVV) the chain is Extracellular. 2 N-linked (GlcNAc...) asparagine glycosylation sites follow: asparagine 6 and asparagine 15. A helical transmembrane segment spans residues 35-58 (GMGIVMSLIVLAIVFGNVLVITAI). Residues 59-71 (ARFERLQTVTNYF) lie on the Cytoplasmic side of the membrane. The helical transmembrane segment at 72-95 (ITSLACADLVMGLAVVPFGASHIL) threads the bilayer. Residues 96-106 (MKMWTFGNFWC) are Extracellular-facing. 2 disulfides stabilise this stretch: cysteine 106–cysteine 191 and cysteine 184–cysteine 190. Residues 107–129 (EFWTSIDVLCVTASIETLCVIAV) form a helical membrane-spanning segment. The Cytoplasmic portion of the chain corresponds to 130-150 (DRYFAITSPFKYQSLLTKNKA). Phosphotyrosine is present on tyrosine 141. Residues 151–174 (RVVILMVWIVSGLTSFLPIQMHWY) form a helical membrane-spanning segment. Topologically, residues 175 to 196 (RATHQEAINCYAKETCCDFFTN) are extracellular. The chain crosses the membrane as a helical span at residues 197–220 (QAYAIASSIVSFYLPLVVMVFVYS). Topologically, residues 221-274 (RVFQVAQRQLQKIDRSEGRFHAQNLSQVEQDGRSGHGHRRSSKFCLKEHKALKT) are cytoplasmic. Position 246 is a phosphoserine (serine 246). Phosphoserine; by PKA occurs at positions 261 and 262. Cysteine 265 is lipidated: S-palmitoyl cysteine. Residues 275 to 298 (LGIIMGTFTLCWLPFFIVNIVHVI) form a helical membrane-spanning segment. The Extracellular portion of the chain corresponds to 299-305 (QDNLIPK). The helical transmembrane segment at 306–329 (EVYILLNWVGYVNSAFNPLIYCRS) threads the bilayer. At 330–415 (PDFRIAFQEL…RNCSTNDSLL (86 aa)) the chain is on the cytoplasmic side. The S-palmitoyl cysteine moiety is linked to residue cysteine 341. Phosphoserine; by PKA occurs at positions 345 and 346. Serine 355 bears the Phosphoserine; by BARK mark. Residues 379–415 (SELLCEDPPGTEDRQGTVPSDSVDSQGRNCSTNDSLL) are disordered. 2 positions are modified to 4-hydroxyproline: proline 387 and proline 397. A compositionally biased stretch (polar residues) spans 395 to 415 (TVPSDSVDSQGRNCSTNDSLL). Residues 412–415 (DSLL) carry the PDZ-binding motif.

It belongs to the G-protein coupled receptor 1 family. Adrenergic receptor subfamily. ADRB2 sub-subfamily. In terms of assembly, binds NHERF1 and GPRASP1. Interacts with ARRB1 and ARRB2. Interacts with SRC. Interacts with USP20 and USP33. Interacts with VHL; the interaction, which is increased on hydroxylation of ADRB2, ubiquitinates ADRB2 leading to its degradation. Interacts with EGLN3; the interaction hydroxylates ADRB2 facilitating VHL-E3 ligase-mediated ubiquitination. Interacts (via PDZ-binding motif) with SNX27 (via PDZ domain); the interaction is required when endocytosed to prevent degradation in lysosomes and promote recycling to the plasma membrane. Interacts with CNIH4. Interacts with ARRDC3. Interacts with NEDD4. Interacts with MARCHF2. Post-translationally, palmitoylated; may reduce accessibility of Ser-345 and Ser-346 by anchoring Cys-341 to the plasma membrane. Agonist stimulation promotes depalmitoylation and further allows Ser-345 and Ser-346 phosphorylation. In terms of processing, phosphorylated by PKA and BARK upon agonist stimulation, which mediates homologous desensitization of the receptor. PKA-mediated phosphorylation seems to facilitate phosphorylation by BARK. Phosphorylation of Tyr-141 is induced by insulin and leads to supersensitization of the receptor. Post-translationally, polyubiquitinated. Agonist-induced ubiquitination leads to sort internalized receptors to the lysosomes for degradation. Deubiquitination by USP20 and USP33, leads to ADRB2 recycling and resensitization after prolonged agonist stimulation. USP20 and USP33 are constitutively associated and are dissociated immediately after agonist stimulation. Ubiquitination by the VHL-E3 ligase complex is oxygen-dependent. In terms of processing, hydroxylation by EGLN3 occurs only under normoxia and increases the interaction with VHL and the subsequent ubiquitination and degradation of ADRB2. Palmitoylated. Mainly palmitoylated at Cys-341. Palmitoylation may reduce accessibility of phosphorylation sites by anchoring the receptor to the plasma membrane. Agonist stimulation promotes depalmitoylation and further allows Ser-345 and Ser-346 phosphorylation. Also undergoes transient, ligand-induced palmitoylation at Cys-265 probably by ZDHHC9, ZDHHC14 and ZDHHC18 within the Golgi. Palmitoylation at Cys-265 requires phosphorylation by PKA and receptor internalization and stabilizes the receptor. Could be depalmitoylated by LYPLA1 at the plasma membrane.

The protein resides in the cell membrane. It is found in the early endosome. The protein localises to the golgi apparatus. Beta-adrenergic receptors mediate the catecholamine-induced activation of adenylate cyclase through the action of G proteins. The beta-2-adrenergic receptor binds epinephrine with an approximately 30-fold greater affinity than it does norepinephrine. The chain is Beta-2 adrenergic receptor (ADRB2) from Canis lupus familiaris (Dog).